A 214-amino-acid polypeptide reads, in one-letter code: tRNA (guanine-N(7)-)-methyltransferase (214 aa).

Residues Asp35, Glu60, Asn87, and Asp113 each coordinate S-adenosyl-L-methionine. Asp113 is a catalytic residue. Lys117 and Asp149 together coordinate substrate.

The protein belongs to the class I-like SAM-binding methyltransferase superfamily. TrmB family.

The catalysed reaction is guanosine(46) in tRNA + S-adenosyl-L-methionine = N(7)-methylguanosine(46) in tRNA + S-adenosyl-L-homocysteine. It functions in the pathway tRNA modification; N(7)-methylguanine-tRNA biosynthesis. In terms of biological role, catalyzes the formation of N(7)-methylguanine at position 46 (m7G46) in tRNA. The polypeptide is tRNA (guanine-N(7)-)-methyltransferase (Prochlorococcus marinus (strain NATL1A)).